We begin with the raw amino-acid sequence, 488 residues long: GTPase Der (488 aa).

2 consecutive EngA-type G domains span residues 3–166 (PVVA…AEAM) and 199–372 (IKLA…DSAT). GTP is bound by residues 9–16 (GRPNVGKS), 56–60 (DTGGI), 118–121 (NKVD), 205–212 (GKPNVGKS), 252–256 (DTAGV), and 317–320 (NKWD). Positions 373-457 (RRVSTSMLTR…PIQLRFQEGD (85 aa)) constitute a KH-like domain. Residues 469–488 (MSQERRRKRALSHIKDRKTK) form a disordered region. Positions 473-488 (RRRKRALSHIKDRKTK) are enriched in basic residues.

The protein belongs to the TRAFAC class TrmE-Era-EngA-EngB-Septin-like GTPase superfamily. EngA (Der) GTPase family. As to quaternary structure, associates with the 50S ribosomal subunit.

In terms of biological role, GTPase that plays an essential role in the late steps of ribosome biogenesis. The chain is GTPase Der from Shewanella sp. (strain W3-18-1).